The primary structure comprises 221 residues: MAVPLNLAVETEKAQALLQTFSTASLFASAGLGAFCFVADHFLTLPFIQHHLWLRALFDNTVHAIIGLWSWAIVIGLRKKSDFYEVILAGFLASVIDLDHFYMAGSLSIKAAVNLPHRPPLHCSTLIPALCFSLRLLMWACRLKDSWCSLPWMLFISLTSHHIRDGVRHGLWVCPFGNTAPISYWLYVTITATLPHLCSVLMYLTGTRDMISTKHGVAIDV.

A run of 5 helical transmembrane segments spans residues 28–48, 57–77, 86–106, 121–141, and 182–204; these read ASAGLGAFCFVADHFLTLPFI, LFDNTVHAIIGLWSWAIVIGL, VILAGFLASVIDLDHFYMAGS, LHCSTLIPALCFSLRLLMWAC, and ISYWLYVTITATLPHLCSVLMYL.

It localises to the membrane. The sequence is that of Transmembrane protein 267 (tmem267) from Danio rerio (Zebrafish).